A 123-amino-acid polypeptide reads, in one-letter code: PCNA-associated factor (123 aa).

The segment at 1–123 is disordered; the sequence is MVRTKADCAG…SEEAADSGDE (123 aa). The short motif at 26–37 is the D-box element; it reads RKTFGSSSSGSN. Residues 66 to 77 carry the PIP-box motif; that stretch reads QKGIGDFFGSPS. The KEN box motif lies at 83-85; the sequence is KEN. The Initiation motif motif lies at 93-105; it reads EAGGSGAGKKPRK. A compositionally biased stretch (acidic residues) spans 113-123; sequence PSEEAADSGDE.

Interacts with pcna.

The protein localises to the nucleus. The protein resides in the cytoplasm. It localises to the perinuclear region. Functionally, PCNA-binding protein that acts as a regulator of DNA repair during DNA replication. Following DNA damage, the interaction with pcna is disrupted, facilitating the interaction between monoubiquitinated pcna and the translesion DNA synthesis DNA polymerase eta (polh) at stalled replisomes, facilitating the bypass of replication-fork-blocking lesions. Also acts as a regulator of centrosome number. In Xenopus laevis (African clawed frog), this protein is PCNA-associated factor.